The following is a 509-amino-acid chain: FAD-linked oxidoreductase dpmaF (509 aa).

An N-terminal signal peptide occupies residues 1–21 (MTRLSLQLIAGLAGQAWLVNS). Residues 59–231 (LQYEPIAVAV…AEYGFETFPA (173 aa)) form the FAD-binding PCMH-type domain. Residues asparagine 125, asparagine 193, and asparagine 281 are each glycosylated (N-linked (GlcNAc...) asparagine).

The protein belongs to the oxygen-dependent FAD-linked oxidoreductase family. Requires FAD as cofactor.

It participates in secondary metabolite biosynthesis; terpenoid biosynthesis. In terms of biological role, FAD-linked oxidoreductase; part of the gene cluster that mediates the biosynthesis of the diterpenoid pyrones subglutinols A and B. The first step of the pathway is the synthesis of the alpha-pyrone moiety by the polyketide synthase dpmaA via condensation of one acetyl-CoA starter unit with 3 malonyl-CoA units and 2 methylations. The alpha-pyrone is then combined with geranylgeranyl pyrophosphate (GGPP) formed by the GGPP synthase dpmaD through the action of the prenyltransferase dpmaC to yield a linear alpha-pyrone diterpenoid. Subsequent steps in the diterpenoid pyrone biosynthetic pathway involve the decalin core formation, which is initiated by the epoxidation of the C10-C11 olefin by the FAD-dependent oxidoreductase dpmaE, and is followed by a cyclization cascade catalyzed by the terpene cyclase dpmaB. The dehydrogenase dpmaF is then involved in tetrahydrofuran (THF) ring formation at the C5 unit to complete the formation of subglutinols A and B. The protein is FAD-linked oxidoreductase dpmaF of Metarhizium anisopliae (Entomophthora anisopliae).